Consider the following 498-residue polypeptide: Glycerol kinase (498 aa).

Threonine 12 contacts ADP. Residues threonine 12, threonine 13, and serine 14 each coordinate ATP. Threonine 12 is a binding site for sn-glycerol 3-phosphate. Arginine 16 serves as a coordination point for ADP. The sn-glycerol 3-phosphate site is built by arginine 82, glutamate 83, tyrosine 134, and aspartate 243. Residues arginine 82, glutamate 83, tyrosine 134, aspartate 243, and glutamine 244 each coordinate glycerol. Residues threonine 265 and glycine 308 each contribute to the ADP site. Positions 265, 308, 312, and 409 each coordinate ATP. ADP-binding residues include glycine 409 and asparagine 413.

Belongs to the FGGY kinase family. As to quaternary structure, homotetramer and homodimer (in equilibrium).

The catalysed reaction is glycerol + ATP = sn-glycerol 3-phosphate + ADP + H(+). The protein operates within polyol metabolism; glycerol degradation via glycerol kinase pathway; sn-glycerol 3-phosphate from glycerol: step 1/1. With respect to regulation, activated by phosphorylation and inhibited by fructose 1,6-bisphosphate (FBP). In terms of biological role, key enzyme in the regulation of glycerol uptake and metabolism. Catalyzes the phosphorylation of glycerol to yield sn-glycerol 3-phosphate. In Clostridium botulinum (strain 657 / Type Ba4), this protein is Glycerol kinase.